Reading from the N-terminus, the 561-residue chain is Lengsin (561 aa).

2 disordered regions span residues 1-78 (MNDE…WHNA) and 91-112 (SLPSAGAPDAEFNPNTDHTRDN). Basic residues predominate over residues 26–37 (NKLKRTRRKVTK). Positions 50 to 63 (MANSREMSRNQTAD) are enriched in polar residues. Residues 135–229 (NHLQFVRFEA…VICDTFTVTG (95 aa)) form the GS beta-grasp domain. Positions 236–561 (PRYIAKRQLR…EGNKFLEYFI (326 aa)) constitute a GS catalytic domain.

It belongs to the glutamine synthetase family. As to quaternary structure, dodecamer. Interacts with BFSP2 and VIM. In terms of tissue distribution, expressed in lens.

In terms of biological role, may act as a component of the cytoskeleton or as a chaperone for the reorganization of intermediate filament proteins during terminal differentiation in the lens. Does not seem to have enzymatic activity. The sequence is that of Lengsin (Lgsn) from Rattus norvegicus (Rat).